The chain runs to 615 residues: Deoxyribodipyrimidine photo-lyase (615 aa).

A disordered region spans residues 1–53; sequence MAPSKRKASAPPQTSHVNGNPSADKKRKTTTDAPPTNPNTSSDPLRAPHPFYK. Residues 11-21 show a composition bias toward polar residues; it reads PPQTSHVNGNP. Over residues 31–40 the composition is skewed to low complexity; the sequence is TDAPPTNPNT. The Photolyase/cryptochrome alpha/beta domain maps to 108 to 249; it reads QAVVHWFKMD…AADVVHDTCV (142 aa). Tyr352 is a binding site for FAD. DNA is bound at residue Arg356. 364-368 lines the FAD pocket; the sequence is TSNLS. Interaction with DNA regions lie at residues 407–414 and 474–475; these read EVAWRDFY and NR. An FAD-binding site is contributed by 505–507; sequence DGD. Gln537 contacts DNA.

The protein belongs to the DNA photolyase class-1 family. Monomer. The cofactor is FAD. Requires (6R)-5,10-methylene-5,6,7,8-tetrahydrofolate as cofactor.

It catalyses the reaction cyclobutadipyrimidine (in DNA) = 2 pyrimidine residues (in DNA).. In terms of biological role, involved in repair of UV radiation-induced DNA damage. Catalyzes the light-dependent monomerization (300-600 nm) of cyclobutyl pyrimidine dimers (in cis-syn configuration), which are formed between adjacent bases on the same DNA strand upon exposure to ultraviolet radiation. The polypeptide is Deoxyribodipyrimidine photo-lyase (phr) (Neurospora crassa (strain ATCC 24698 / 74-OR23-1A / CBS 708.71 / DSM 1257 / FGSC 987)).